The primary structure comprises 600 residues: Arginine--tRNA ligase (600 aa).

Positions 123-133 (PNVAKPMHVGH) match the 'HIGH' region motif.

This sequence belongs to the class-I aminoacyl-tRNA synthetase family. Monomer.

Its subcellular location is the cytoplasm. The catalysed reaction is tRNA(Arg) + L-arginine + ATP = L-arginyl-tRNA(Arg) + AMP + diphosphate. In Caulobacter vibrioides (strain NA1000 / CB15N) (Caulobacter crescentus), this protein is Arginine--tRNA ligase.